We begin with the raw amino-acid sequence, 138 residues long: Large ribosomal subunit protein uL16 (138 aa).

Positions 1 to 15 are enriched in basic residues; sequence MLSPRKVKYRKKQRG. Residues 1–21 are disordered; it reads MLSPRKVKYRKKQRGRLSGEA.

The protein belongs to the universal ribosomal protein uL16 family. In terms of assembly, part of the 50S ribosomal subunit.

Functionally, binds 23S rRNA and is also seen to make contacts with the A and possibly P site tRNAs. The protein is Large ribosomal subunit protein uL16 of Borrelia recurrentis (strain A1).